The primary structure comprises 474 residues: Lactococcin A secretion protein LcnD (474 aa).

Residues 1–21 lie on the Cytoplasmic side of the membrane; sequence MFDKKLLESSELYDKRYRNFS. Residues 22-44 form a helical membrane-spanning segment; that stretch reads TLIILPLFILLVGGVIFTFFAHK. The Extracellular portion of the chain corresponds to 45 to 474; it reads ELTVISTGSI…LDKIMGRGNQ (430 aa).

It belongs to the membrane fusion protein (MFP) (TC 8.A.1) family.

Its subcellular location is the cell membrane. In terms of biological role, involved in the secretion of lactococcin A. This is Lactococcin A secretion protein LcnD (lcnD) from Lactococcus lactis subsp. cremoris (Streptococcus cremoris).